The sequence spans 157 residues: UPF0262 protein RL0614 (157 aa).

This sequence belongs to the UPF0262 family.

The protein is UPF0262 protein RL0614 of Rhizobium johnstonii (strain DSM 114642 / LMG 32736 / 3841) (Rhizobium leguminosarum bv. viciae).